Consider the following 356-residue polypeptide: DNA polymerase IV (356 aa).

The 182-residue stretch at 6–187 (IIHIDMDAFY…QPIRRLHGVG (182 aa)) folds into the UmuC domain. Mg(2+) contacts are provided by D10 and D105. Residue E106 is part of the active site.

The protein belongs to the DNA polymerase type-Y family. In terms of assembly, monomer. Mg(2+) serves as cofactor.

It is found in the cytoplasm. It carries out the reaction DNA(n) + a 2'-deoxyribonucleoside 5'-triphosphate = DNA(n+1) + diphosphate. Its function is as follows. Poorly processive, error-prone DNA polymerase involved in untargeted mutagenesis. Copies undamaged DNA at stalled replication forks, which arise in vivo from mismatched or misaligned primer ends. These misaligned primers can be extended by PolIV. Exhibits no 3'-5' exonuclease (proofreading) activity. May be involved in translesional synthesis, in conjunction with the beta clamp from PolIII. The chain is DNA polymerase IV from Halorhodospira halophila (strain DSM 244 / SL1) (Ectothiorhodospira halophila (strain DSM 244 / SL1)).